A 67-amino-acid polypeptide reads, in one-letter code: COP9 signalosome complex subunit 9 homolog (67 aa).

Residues 1-31 (MKPSLAADEMFSEGPGYMEMDESGGATGMMM) are disordered.

The protein belongs to the CSN9 family. In terms of assembly, probable component of the COP9 signalosome (CSN) complex.

Its function is as follows. Component of the COP9 signalosome complex (CSN), a complex involved in various cellular and developmental processes. The CSN complex is an essential regulator of the ubiquitin (Ubl) conjugation pathway by mediating the deneddylation of the cullin subunits of SCF-type E3 ligase complexes, leading to decrease the Ubl ligase activity. The sequence is that of COP9 signalosome complex subunit 9 homolog from Drosophila melanogaster (Fruit fly).